The sequence spans 110 residues: Ferredoxin (110 aa).

4Fe-4S ferredoxin-type domains lie at Thr-2–Glu-30 and Phe-31–Pro-60. Positions 9 and 17 each coordinate [3Fe-4S] cluster. [4Fe-4S] cluster is bound by residues Cys-21, Cys-40, Cys-43, and Cys-46. Residue Cys-50 coordinates [3Fe-4S] cluster.

[4Fe-4S] cluster serves as cofactor. The cofactor is [3Fe-4S] cluster.

Ferredoxins are iron-sulfur proteins that transfer electrons in a wide variety of metabolic reactions. The polypeptide is Ferredoxin (fdxA) (Rickettsia typhi (strain ATCC VR-144 / Wilmington)).